The sequence spans 370 residues: Probable dual-specificity RNA methyltransferase RlmN (370 aa).

Glutamate 91 acts as the Proton acceptor in catalysis. Residues 97–329 (QHYGLSVCVT…KKNGVNCVVR (233 aa)) enclose the Radical SAM core domain. Residues cysteine 104 and cysteine 340 are joined by a disulfide bond. [4Fe-4S] cluster-binding residues include cysteine 111, cysteine 115, and cysteine 118. S-adenosyl-L-methionine contacts are provided by residues 163–164 (GE), serine 195, 218–220 (SLH), and asparagine 296. Cysteine 340 functions as the S-methylcysteine intermediate in the catalytic mechanism.

It belongs to the radical SAM superfamily. RlmN family. Requires [4Fe-4S] cluster as cofactor.

The protein resides in the cytoplasm. The catalysed reaction is adenosine(2503) in 23S rRNA + 2 reduced [2Fe-2S]-[ferredoxin] + 2 S-adenosyl-L-methionine = 2-methyladenosine(2503) in 23S rRNA + 5'-deoxyadenosine + L-methionine + 2 oxidized [2Fe-2S]-[ferredoxin] + S-adenosyl-L-homocysteine. It catalyses the reaction adenosine(37) in tRNA + 2 reduced [2Fe-2S]-[ferredoxin] + 2 S-adenosyl-L-methionine = 2-methyladenosine(37) in tRNA + 5'-deoxyadenosine + L-methionine + 2 oxidized [2Fe-2S]-[ferredoxin] + S-adenosyl-L-homocysteine. Functionally, specifically methylates position 2 of adenine 2503 in 23S rRNA and position 2 of adenine 37 in tRNAs. The protein is Probable dual-specificity RNA methyltransferase RlmN of Streptococcus suis (strain 98HAH33).